Reading from the N-terminus, the 325-residue chain is Serine/threonine-protein kinase CtkA (325 aa).

ATP is bound by residues 21-24, Lys-37, Gln-72, and 88-90; these read NGNK and KDF. 2 residues coordinate Mg(2+): Asn-160 and Asp-179. Asp-179 lines the ATP pocket. Residues 296 to 325 are disordered; it reads QHKQAHSNPYDNADDLDNSNEYTPTPKRRR.

Post-translationally, autophosphorylates on either Thr-3 or Thr-7.

It is found in the secreted. The protein resides in the host cytoplasm. The protein localises to the host cytosol. It localises to the host nucleus. It carries out the reaction L-seryl-[protein] + ATP = O-phospho-L-seryl-[protein] + ADP + H(+). The enzyme catalyses L-threonyl-[protein] + ATP = O-phospho-L-threonyl-[protein] + ADP + H(+). In terms of biological role, virulence factor acting as a pro-inflammatory protein that induces the secretion of the pro-inflammatory cytokines TNF-alpha (tumor necrosis factor-alpha) and IL-8 (interleukin-8) from human macrophages, as well as enhanced translocation of the transcription factor NF-kappa-B complex in macrophages. Is a kinase capable of autophosphorylating itself at a threonine residue near the N-terminus. Also leads to enhanced phosphorylation of the NF-kappa-B p65 subunit (RELA) at 'Ser-276' in human epithelial cancer cells; its kinase activity is required for this enhanced phosphorylation that up-regulates NF-kappa-B activity, but it does not directly phosphorylate this protein. Thus, the kinase activity of CtkA may play an important role in the induction of host inflammatory responses during H.pylori infection. The chain is Serine/threonine-protein kinase CtkA (ctkA) from Helicobacter pylori (strain J99 / ATCC 700824) (Campylobacter pylori J99).